A 985-amino-acid chain; its full sequence is Cation channel sperm-associated auxiliary subunit epsilon (985 aa).

The first 35 residues, 1–35 (MPSAGQRKPGSLLALQALQKWLLRGGVGAMLARQV), serve as a signal peptide directing secretion. Residues 36 to 937 (VAALLLWLSC…ESLGMIPRSS (902 aa)) are Extracellular-facing. 4 disulfides stabilise this stretch: C87/C101, C130/C235, C275/C365, and C439/C442. N91, N143, and N292 each carry an N-linked (GlcNAc...) asparagine glycan. Residues N502, N517, and N565 are each glycosylated (N-linked (GlcNAc...) asparagine). 4 disulfides stabilise this stretch: C617–C724, C737–C919, C753–C786, and C838–C869. N749 carries an N-linked (GlcNAc...) asparagine glycan. Residue N830 is glycosylated (N-linked (GlcNAc...) asparagine). N888, N915, and N920 each carry an N-linked (GlcNAc...) asparagine glycan. A helical membrane pass occupies residues 938 to 958 (VYLVAALIFVLMLTFISILVL). The Cytoplasmic segment spans residues 959-985 (SYFWYLKIYRQFIIEPLHKRPAKQKKN).

The protein belongs to the CATSPERD family. As to quaternary structure, component of the CatSper complex or CatSpermasome composed of the core pore-forming members CATSPER1, CATSPER2, CATSPER3 and CATSPER4 as well as auxiliary members CATSPERB, CATSPERG2, CATSPERD, CATSPERE, CATSPERZ, C2CD6/CATSPERT, SLCO6C1, TMEM249, TMEM262 and EFCAB9. HSPA1 may be an additional auxiliary complex member. The core complex members CATSPER1, CATSPER2, CATSPER3 and CATSPER4 form a heterotetrameric channel. The auxiliary CATSPERB, CATSPERG2, CATSPERD and CATSPERE subunits form a pavilion-like structure over the pore which stabilizes the complex through interactions with CATSPER4, CATSPER3, CATSPER1 and CATSPER2 respectively. SLCO6C1 interacts with CATSPERE and TMEM262/CATSPERH interacts with CATSPERB, further stabilizing the complex. C2CD6/CATSPERT interacts at least with CATSPERD and is required for targeting the CatSper complex in the flagellar membrane. Testis-specific.

The protein resides in the cell projection. It is found in the cilium. It localises to the flagellum membrane. Its function is as follows. Auxiliary component of the CatSper complex, a complex involved in sperm cell hyperactivation. Sperm cell hyperactivation is needed for sperm motility which is essential late in the preparation of sperm for fertilization. The protein is Cation channel sperm-associated auxiliary subunit epsilon of Mus musculus (Mouse).